We begin with the raw amino-acid sequence, 1118 residues long: MGVQGFQDYIEKHCPSAVVPVELQKLARGSLVGGGRQRPPQTPLRLLVDADNCLHRLYGGFYTDWVSGGQWNHMLGYLAALAKACFGGNIELFVFFNGALEKARLHEWVKRQGNERQTAQQIVSHVQNKGTPPPKVWFLPPVCMAHCIRLALIRFHVKVAQSIEDHHQEVIGFCRENGFHGLVAYDSDYALCNIPYYFSAHALKLSRNGKSLTTSQYLMHEVAKQLDLNPNRFPIFAALLGNHILPDEDLASFHWSLLGPEHPLASLKVRAHQLVLPPCDVVIKAVADYVRNIQDTSDLDAIAKDVFQHSQSRTDDKVIRFKRAIGYYSATSKPMSFHPPHYLAARPGPFGMPGMVPPHVPPQMLNIPQTSLQAKPVAPQVPSPGGAPGQGPYPYSLSEPAPLTLDTSGKNLTEQNSYSNIPHEGKHTPLYERSSPINPAQSGSPNHVDSAYFPGSSTSSSSDNDEGSGGATNHISGNKIGWEKTGSHSEPQARGDPGDQTKAEGSSTASSGSQLAEGKGSQMGTVQPIPCLLSMPTRNHMDITTPPLPPVAPEVLRVAEHRHKKGLMYPYIFHVLTKGEIKIAVSIEDEANKDLPPAALLYRPVRQYVYGVLFSLAESRKKTERLAFRKNRLPPEFSPVIIKEWAAYKGKSPQTPELVEALAFREWTCPNLKRLWLGKAVEDKNRRMRAFLACMRSDTPAMLNPANVPTHLMVLCCVLRYMVQWPGARILRRQELDAFLAQALSPKLYEPDQLQELKIENLDPRGIQLSALFMSGVDMALFANDACGQPIPWEHCCPWMYFDGKLFQSKLLKASREKTPLIDLCDGQADQAAKVEKMRQSVLEGLSFSRQSHTLPFPPPPALPFYPASAYPRHFGPVPPSQGRGRGFAGVCGFGGPYGETVATGPYRAFRVAAASGHCGAFSGSDSSRTSKSQGGVQPIPSQGGKLEIAGTVVGHWAGSRRGRGGRGPFPLQVVSVGGPARGRPRGVISTPVIRTFGRGGRYYGRGYKNQAAIQGRPPYAASAEEVAKELKSKSGESKSSAMSSDGSLAENGVMAEEKPAPQMNGSTGDARAPSHSESALNNDSKTCNTNPHLNALSTDSACRREAALEAAVLNKEE.

Residues 339-405 (PPHYLAARPG…SLSEPAPLTL (67 aa)) are interaction with YES1, SRC and FYN. The segment at 374 to 533 (AKPVAPQVPS…GTVQPIPCLL (160 aa)) is disordered. Residues 376–396 (PVAPQVPSPGGAPGQGPYPYS) are compositionally biased toward low complexity. Polar residues-rich tracts occupy residues 405-420 (LDTS…SYSN) and 435-447 (SPIN…SPNH). Over residues 481–502 (GWEKTGSHSEPQARGDPGDQTK) the composition is skewed to basic and acidic residues. Over residues 503 to 514 (AEGSSTASSGSQ) the composition is skewed to polar residues. Residue threonine 655 is modified to Phosphothreonine. The RNA binding stretch occupies residues 829–1118 (ADQAAKVEKM…LEAAVLNKEE (290 aa)). Arginine 873, arginine 884, and arginine 886 each carry omega-N-methylarginine. The disordered stretch occupies residues 921–945 (AFSGSDSSRTSKSQGGVQPIPSQGG). The segment covering 924–936 (GSDSSRTSKSQGG) has biased composition (polar residues). Lysine 932 is subject to N6-acetyllysine. A Phosphoserine modification is found at serine 960. Omega-N-methylarginine is present on residues arginine 982 and arginine 986. Serine 1023 carries the phosphoserine modification. Residues 1025–1102 (EEVAKELKSK…HLNALSTDSA (78 aa)) form a disordered region. The segment covering 1026 to 1037 (EVAKELKSKSGE) has biased composition (basic and acidic residues). Over residues 1038-1051 (SKSSAMSSDGSLAE) the composition is skewed to low complexity. Phosphoserine is present on residues serine 1044, serine 1045, and serine 1048. Residues 1076–1101 (HSESALNNDSKTCNTNPHLNALSTDS) are compositionally biased toward polar residues.

Belongs to the constitutive coactivator of PPAR-gamma family. Interacts with PURA. Interacts with SRC family protein kinases YES1, SRC and FYN. Upon tyrosine phosphorylation, interacts with PIK3R1. Interacts with IGF2BP1/IMP-1 in an RNA-dependent manner. Arg-982 is dimethylated, probably to asymmetric dimethylarginine. Post-translationally, phosphorylated on tyrosine by SRC family protein kinases upon oxidative stress, for instance following UV irradiation. As to expression, widely expressed. In gastric mucosa, detected in the bottom region of the foveolar epithelium (at protein level).

It localises to the cytoplasm. It is found in the cell membrane. Its function is as follows. Component of the oxidative stress-induced survival signaling. May regulate the activation of SRC family protein kinases. May act as a scaffolding protein enabling SRC family protein kinases to phosphorylate and activate PI3-kinase. Binds IGF2 RNA and promotes the production of IGF2 protein. The chain is Constitutive coactivator of PPAR-gamma-like protein 1 (FAM120A) from Homo sapiens (Human).